A 349-amino-acid chain; its full sequence is Anthranilate phosphoribosyltransferase (349 aa).

Residues Gly-82, 85–86 (GD), 92–95 (NVST), 110–118 (KHGNRAVSG), and Ser-122 each bind 5-phospho-alpha-D-ribose 1-diphosphate. Gly-82 is an anthranilate binding site. Ser-94 contacts Mg(2+). Asn-113 is an anthranilate binding site. Position 168 (Arg-168) interacts with anthranilate. Mg(2+) contacts are provided by Asp-227 and Glu-228.

It belongs to the anthranilate phosphoribosyltransferase family. In terms of assembly, homodimer. The cofactor is Mg(2+).

It catalyses the reaction N-(5-phospho-beta-D-ribosyl)anthranilate + diphosphate = 5-phospho-alpha-D-ribose 1-diphosphate + anthranilate. Its pathway is amino-acid biosynthesis; L-tryptophan biosynthesis; L-tryptophan from chorismate: step 2/5. In terms of biological role, catalyzes the transfer of the phosphoribosyl group of 5-phosphorylribose-1-pyrophosphate (PRPP) to anthranilate to yield N-(5'-phosphoribosyl)-anthranilate (PRA). The polypeptide is Anthranilate phosphoribosyltransferase (Pseudomonas fluorescens (strain SBW25)).